Reading from the N-terminus, the 1770-residue chain is Vitellogenin (1770 aa).

The N-terminal stretch at 1-16 (MLLLLTLLLFAGTVAA) is a signal peptide. Residues 22 to 809 (WQVGNEYTYL…SEDSVIPRIL (788 aa)) enclose the Vitellogenin domain. Cysteines 178 and 222 form a disulfide. Asn-296 is a glycosylation site (N-linked (GlcNAc...) asparagine). The interval 373–394 (SSSSSISSSEENDFWQPKPTLE) is disordered. An N-linked (GlcNAc...) asparagine glycan is attached at Asn-1067. The 194-residue stretch at 1442 to 1635 (TSCMLDKTRA…SYALISNQCE (194 aa)) folds into the VWFD domain. Cystine bridges form between Cys-1444–Cys-1598 and Cys-1466–Cys-1634.

As to expression, accumulates in the hemolymph. Represents up to 70% of the queen's hemolymph proteins. During the first week of the worker adult life, when it becomes a nurse bee and performs brood-rearing tasks, the vitellogenin titer increases and may account for up to 40% of the total hemolymph proteins.

It localises to the secreted. Precursor of the egg-yolk proteins that are sources of nutrients during embryonic development. Involved in the differentiation of honeybee larvae into queens. The chain is Vitellogenin (Vg) from Apis mellifera (Honeybee).